Consider the following 442-residue polypeptide: D-serine dehydratase (442 aa).

Lysine 118 carries the N6-(pyridoxal phosphate)lysine modification.

The protein belongs to the serine/threonine dehydratase family. DsdA subfamily. In terms of assembly, monomer. Requires pyridoxal 5'-phosphate as cofactor.

It catalyses the reaction D-serine = pyruvate + NH4(+). In Escherichia fergusonii (strain ATCC 35469 / DSM 13698 / CCUG 18766 / IAM 14443 / JCM 21226 / LMG 7866 / NBRC 102419 / NCTC 12128 / CDC 0568-73), this protein is D-serine dehydratase.